The chain runs to 108 residues: Placenta-specific protein 9 (108 aa).

The N-terminal stretch at 1-19 (MQALLCALAGLALLRAGTG) is a signal peptide. Disordered regions lie at residues 18–49 (TGEW…SPGC) and 89–108 (SNLP…DDGF). The stretch at 54–91 (AVQRRLDIMEETVEKTVEHLEAEVTGLLGLLEELASNL) forms a coiled coil.

The protein belongs to the PLAC9 family. As to expression, highly expressed in placenta, and weakly in ovary, testis, and lung.

It is found in the secreted. The chain is Placenta-specific protein 9 (Plac9) from Mus musculus (Mouse).